Consider the following 157-residue polypeptide: MLVLLAGIFVVHIATVIMLFVSTIANVWLVSNTVDASVGLWKNCTNISCSDSLSYASEDALKTVQAFMILSIIFCVIALLVFVFQLFTMEKGNRFFLSGATTLVCWLCILVGVSIYTSHYANRDGTQYHHGYSYILGWICFCFSFIIGVLYLVLRKK.

The chain crosses the membrane as a helical span at residues Met1–Val21. 2 N-linked (GlcNAc...) asparagine glycosylation sites follow: Asn43 and Asn46. 3 helical membrane passes run Phe67–Phe87, Phe95–Ile115, and Tyr134–Leu154.

It belongs to the PMP-22/EMP/MP20 family.

Its subcellular location is the membrane. This chain is Epithelial membrane protein 1 (EMP1), found in Homo sapiens (Human).